We begin with the raw amino-acid sequence, 243 residues long: Ubiquinone/menaquinone biosynthesis C-methyltransferase UbiE (243 aa).

S-adenosyl-L-methionine is bound by residues Thr69, Asp90, and 116–117; that span reads DA.

It belongs to the class I-like SAM-binding methyltransferase superfamily. MenG/UbiE family.

It carries out the reaction a 2-demethylmenaquinol + S-adenosyl-L-methionine = a menaquinol + S-adenosyl-L-homocysteine + H(+). It catalyses the reaction a 2-methoxy-6-(all-trans-polyprenyl)benzene-1,4-diol + S-adenosyl-L-methionine = a 5-methoxy-2-methyl-3-(all-trans-polyprenyl)benzene-1,4-diol + S-adenosyl-L-homocysteine + H(+). Its pathway is quinol/quinone metabolism; menaquinone biosynthesis; menaquinol from 1,4-dihydroxy-2-naphthoate: step 2/2. It participates in cofactor biosynthesis; ubiquinone biosynthesis. Functionally, methyltransferase required for the conversion of demethylmenaquinol (DMKH2) to menaquinol (MKH2) and the conversion of 2-polyprenyl-6-methoxy-1,4-benzoquinol (DDMQH2) to 2-polyprenyl-3-methyl-6-methoxy-1,4-benzoquinol (DMQH2). The sequence is that of Ubiquinone/menaquinone biosynthesis C-methyltransferase UbiE from Burkholderia cenocepacia (strain ATCC BAA-245 / DSM 16553 / LMG 16656 / NCTC 13227 / J2315 / CF5610) (Burkholderia cepacia (strain J2315)).